Here is a 128-residue protein sequence, read N- to C-terminus: Large ribosomal subunit protein bL17 (128 aa).

This sequence belongs to the bacterial ribosomal protein bL17 family. Part of the 50S ribosomal subunit. Contacts protein L32.

This is Large ribosomal subunit protein bL17 from Streptococcus pyogenes serotype M5 (strain Manfredo).